Reading from the N-terminus, the 78-residue chain is Large ribosomal subunit protein bL28 (78 aa).

Residues 1–21 (MSRVCQVTGKRPMSGNNRSHA) are disordered.

Belongs to the bacterial ribosomal protein bL28 family.

In Photorhabdus laumondii subsp. laumondii (strain DSM 15139 / CIP 105565 / TT01) (Photorhabdus luminescens subsp. laumondii), this protein is Large ribosomal subunit protein bL28.